Reading from the N-terminus, the 281-residue chain is Translation initiation factor IF3-4, chloroplastic (281 aa).

Residues 1–51 (MAGITSTVGFNAILAGATKTVSHPVKSKLFGLRLCVPEFSIVSLSPYHHRR) constitute a chloroplast transit peptide. 2 disordered regions span residues 63–86 (GGGG…DDSL) and 253–281 (KVQE…TQDI). Composition is skewed to basic and acidic residues over residues 70–79 (PGDRRGRQKE) and 253–270 (KVQE…DDKV).

Belongs to the IF-3 family. Monomer.

It localises to the plastid. The protein localises to the chloroplast. Its function is as follows. Chloroplast translation initiation factor that is essential for the coordination of leaf and chloroplast development. IF-3 binds to the 30S ribosomal subunit and shifts the equilibrium between 70S ribosomes and their 50S and 30S subunits in favor of the free subunits, thus enhancing the availability of 30S subunits on which protein synthesis initiation begins. The protein is Translation initiation factor IF3-4, chloroplastic of Arabidopsis thaliana (Mouse-ear cress).